Reading from the N-terminus, the 128-residue chain is Glycoprotein hormone alpha-2 (128 aa).

Residues 1–20 form the signal peptide; that stretch reads MPMAPRVLLLCLLGLAVTEG. 4 disulfide bridges follow: Cys30–Cys88, Cys47–Cys102, Cys56–Cys118, and Cys60–Cys120. Asn36 and Asn80 each carry an N-linked (GlcNAc...) asparagine glycan.

Belongs to the glycoprotein hormones subunit alpha family. Heterodimer with GPHB5; this heterodimer interacts with thyroid-stimulating hormone receptor (TSHR), and hence stimulates cAMP production.

It localises to the secreted. Functionally, functions as a heterodimeric glycoprotein hormone with GPHB5 able to bind and activate the thyroid-stimulating hormone receptor (TSHR), leading to increased cAMP production. Plays a central role in controlling thyroid cell metabolism. The polypeptide is Glycoprotein hormone alpha-2 (Gpha2) (Mus musculus (Mouse)).